The following is a 357-amino-acid chain: Beta-hexosaminidase (357 aa).

Substrate contacts are provided by residues aspartate 66, arginine 74, arginine 140, and 170–171; that span reads KH. The active-site Proton donor/acceptor is the histidine 183. Residue aspartate 254 is the Nucleophile of the active site.

It belongs to the glycosyl hydrolase 3 family. NagZ subfamily.

The protein localises to the cytoplasm. The catalysed reaction is Hydrolysis of terminal non-reducing N-acetyl-D-hexosamine residues in N-acetyl-beta-D-hexosaminides.. Its pathway is cell wall biogenesis; peptidoglycan recycling. Its function is as follows. Plays a role in peptidoglycan recycling by cleaving the terminal beta-1,4-linked N-acetylglucosamine (GlcNAc) from peptide-linked peptidoglycan fragments, giving rise to free GlcNAc, anhydro-N-acetylmuramic acid and anhydro-N-acetylmuramic acid-linked peptides. The polypeptide is Beta-hexosaminidase (Chromobacterium violaceum (strain ATCC 12472 / DSM 30191 / JCM 1249 / CCUG 213 / NBRC 12614 / NCIMB 9131 / NCTC 9757 / MK)).